The sequence spans 130 residues: Small ribosomal subunit protein uS8 (130 aa).

This sequence belongs to the universal ribosomal protein uS8 family. Part of the 30S ribosomal subunit. Contacts proteins S5 and S12.

In terms of biological role, one of the primary rRNA binding proteins, it binds directly to 16S rRNA central domain where it helps coordinate assembly of the platform of the 30S subunit. The sequence is that of Small ribosomal subunit protein uS8 from Aeromonas hydrophila subsp. hydrophila (strain ATCC 7966 / DSM 30187 / BCRC 13018 / CCUG 14551 / JCM 1027 / KCTC 2358 / NCIMB 9240 / NCTC 8049).